A 278-amino-acid polypeptide reads, in one-letter code: Sulfur carrier protein FdhD (278 aa).

The active-site Cysteine persulfide intermediate is the C121. Position 260–265 (260–265 (FCKPGR)) interacts with Mo-bis(molybdopterin guanine dinucleotide).

The protein belongs to the FdhD family.

It is found in the cytoplasm. Its function is as follows. Required for formate dehydrogenase (FDH) activity. Acts as a sulfur carrier protein that transfers sulfur from IscS to the molybdenum cofactor prior to its insertion into FDH. This chain is Sulfur carrier protein FdhD, found in Salmonella agona (strain SL483).